The primary structure comprises 261 residues: Endomucin (261 aa).

Positions 1–18 are cleaved as a signal peptide; it reads MELLQVTILFLLPSICSS. Residues Asn-19, Asn-28, Asn-98, and Asn-104 are each glycosylated (N-linked (GlcNAc...) asparagine). The Extracellular portion of the chain corresponds to 19 to 190; it reads NSTGVLEAAN…TSATSRSYSS (172 aa). Composition is skewed to polar residues over residues 118-134 and 146-171; these read TLQS…SIKT and ASPS…SQVI. A disordered region spans residues 118–183; sequence TLQSSKPKTE…EGGKNASTSA (66 aa). 2 N-linked (GlcNAc...) asparagine glycosylation sites follow: Asn-164 and Asn-178. Residues 191–211 form a helical membrane-spanning segment; sequence IILPVVIALIVITLSVFVLVG. Residues 212 to 261 are Cytoplasmic-facing; the sequence is LYRMCWKADPGTPENGNDQPQSDKESVKLLTVKTISHESGEHSAQGKTKN. Ser-237 carries the post-translational modification Phosphoserine.

Post-translationally, highly O-glycosylated. Sialic acid-rich glycoprotein. As to expression, expressed in heart, kidney and lung.

Its subcellular location is the cell membrane. It localises to the membrane. The protein localises to the secreted. In terms of biological role, endothelial sialomucin, also called endomucin or mucin-like sialoglycoprotein, which interferes with the assembly of focal adhesion complexes and inhibits interaction between cells and the extracellular matrix. In Homo sapiens (Human), this protein is Endomucin (EMCN).